A 376-amino-acid polypeptide reads, in one-letter code: Proton extrusion protein PxcA (376 aa).

4 helical membrane passes run 150–170 (TLIS…VQQM), 251–271 (AVKN…VCII), 299–319 (IILF…QVLL), and 334–354 (FILL…KYWI).

It belongs to the CemA family.

It localises to the cell inner membrane. Functionally, required for H(+) efflux immediately after light irradiation to form a rapid H(+) concentration gradient across the thylakoid membranes. Together with PxcL, contributes to transient H(+) uptake following dark to light transition. In Prochlorococcus marinus (strain MIT 9303), this protein is Proton extrusion protein PxcA.